Consider the following 273-residue polypeptide: Urease accessory protein UreD (273 aa).

The protein belongs to the UreD family. As to quaternary structure, ureD, UreF and UreG form a complex that acts as a GTP-hydrolysis-dependent molecular chaperone, activating the urease apoprotein by helping to assemble the nickel containing metallocenter of UreC. The UreE protein probably delivers the nickel.

It is found in the cytoplasm. In terms of biological role, required for maturation of urease via the functional incorporation of the urease nickel metallocenter. This chain is Urease accessory protein UreD, found in Rhizobium etli (strain ATCC 51251 / DSM 11541 / JCM 21823 / NBRC 15573 / CFN 42).